The primary structure comprises 372 residues: Protein-glutamate methylesterase/protein-glutamine glutaminase (372 aa).

One can recognise a Response regulatory domain in the interval R5 to T123. D56 carries the post-translational modification 4-aspartylphosphate. Residues G140–S151 are compositionally biased toward polar residues. The segment at G140 to R177 is disordered. Residues P167–R177 show a composition bias toward basic and acidic residues. Residues E178 to I364 enclose the CheB-type methylesterase domain. Active-site residues include S190, H217, and D313.

It belongs to the CheB family. Phosphorylated by CheA. Phosphorylation of the N-terminal regulatory domain activates the methylesterase activity.

It is found in the cytoplasm. The enzyme catalyses [protein]-L-glutamate 5-O-methyl ester + H2O = L-glutamyl-[protein] + methanol + H(+). It catalyses the reaction L-glutaminyl-[protein] + H2O = L-glutamyl-[protein] + NH4(+). Its function is as follows. Involved in chemotaxis. Part of a chemotaxis signal transduction system that modulates chemotaxis in response to various stimuli. Catalyzes the demethylation of specific methylglutamate residues introduced into the chemoreceptors (methyl-accepting chemotaxis proteins or MCP) by CheR. Also mediates the irreversible deamidation of specific glutamine residues to glutamic acid. This is Protein-glutamate methylesterase/protein-glutamine glutaminase from Treponema denticola (strain ATCC 35405 / DSM 14222 / CIP 103919 / JCM 8153 / KCTC 15104).